The primary structure comprises 326 residues: GMP reductase (326 aa).

Catalysis depends on cysteine 175, which acts as the Thioimidate intermediate. Residue 204 to 227 (IIADGGIRTHGDIAKSIRFGATMV) participates in NADP(+) binding.

It belongs to the IMPDH/GMPR family. GuaC type 2 subfamily.

The catalysed reaction is IMP + NH4(+) + NADP(+) = GMP + NADPH + 2 H(+). Its function is as follows. Catalyzes the irreversible NADPH-dependent deamination of GMP to IMP. It functions in the conversion of nucleobase, nucleoside and nucleotide derivatives of G to A nucleotides, and in maintaining the intracellular balance of A and G nucleotides. The polypeptide is GMP reductase (guaC) (Bacillus subtilis (strain 168)).